The following is a 126-amino-acid chain: Fluoride-specific ion channel FluC (126 aa).

A run of 4 helical transmembrane segments spans residues 6-26 (VLLVGAGGFAGSVARYLVALA), 32-52 (TGFPFATFAVNLLGSFLIGFI), 68-90 (LLLTTGFCGGFTTFSTAMYETGG), and 102-122 (LYVAGSLAGGLACLFSGTLLA). Na(+) is bound by residues Gly-76 and Thr-79.

This sequence belongs to the fluoride channel Fluc/FEX (TC 1.A.43) family.

The protein resides in the cell inner membrane. It carries out the reaction fluoride(in) = fluoride(out). Its activity is regulated as follows. Na(+) is not transported, but it plays an essential structural role and its presence is essential for fluoride channel function. In terms of biological role, fluoride-specific ion channel. Important for reducing fluoride concentration in the cell, thus reducing its toxicity. In Chlorobaculum tepidum (strain ATCC 49652 / DSM 12025 / NBRC 103806 / TLS) (Chlorobium tepidum), this protein is Fluoride-specific ion channel FluC.